The following is a 367-amino-acid chain: Chorismate synthase (367 aa).

NADP(+) is bound at residue arginine 48. FMN contacts are provided by residues 125–127, glycine 284, 299–303, and arginine 325; these read RSS and KPTPS.

It belongs to the chorismate synthase family. In terms of assembly, homotetramer. The cofactor is FMNH2.

It catalyses the reaction 5-O-(1-carboxyvinyl)-3-phosphoshikimate = chorismate + phosphate. It functions in the pathway metabolic intermediate biosynthesis; chorismate biosynthesis; chorismate from D-erythrose 4-phosphate and phosphoenolpyruvate: step 7/7. Catalyzes the anti-1,4-elimination of the C-3 phosphate and the C-6 proR hydrogen from 5-enolpyruvylshikimate-3-phosphate (EPSP) to yield chorismate, which is the branch point compound that serves as the starting substrate for the three terminal pathways of aromatic amino acid biosynthesis. This reaction introduces a second double bond into the aromatic ring system. This Lachnoclostridium phytofermentans (strain ATCC 700394 / DSM 18823 / ISDg) (Clostridium phytofermentans) protein is Chorismate synthase.